The sequence spans 225 residues: Peptidyl-tRNA hydrolase (225 aa).

Residue tyrosine 27 participates in tRNA binding. The Proton acceptor role is filled by histidine 32. 3 residues coordinate tRNA: tyrosine 78, asparagine 80, and asparagine 126. Residues 198 to 225 (FNPLDFSGPDRQDQPAPLNPAKTAPGES) form a disordered region.

The protein belongs to the PTH family. As to quaternary structure, monomer.

Its subcellular location is the cytoplasm. It carries out the reaction an N-acyl-L-alpha-aminoacyl-tRNA + H2O = an N-acyl-L-amino acid + a tRNA + H(+). Hydrolyzes ribosome-free peptidyl-tRNAs (with 1 or more amino acids incorporated), which drop off the ribosome during protein synthesis, or as a result of ribosome stalling. In terms of biological role, catalyzes the release of premature peptidyl moieties from peptidyl-tRNA molecules trapped in stalled 50S ribosomal subunits, and thus maintains levels of free tRNAs and 50S ribosomes. This chain is Peptidyl-tRNA hydrolase, found in Synechococcus sp. (strain JA-3-3Ab) (Cyanobacteria bacterium Yellowstone A-Prime).